The chain runs to 51 residues: Large ribosomal subunit protein bL33 (51 aa).

Residues 1-23 (MREKIKLESSAGTGHFYTTTKNK) form a disordered region. Residues 10–20 (SAGTGHFYTTT) are compositionally biased toward polar residues.

The protein belongs to the bacterial ribosomal protein bL33 family.

The sequence is that of Large ribosomal subunit protein bL33 from Nitrosomonas eutropha (strain DSM 101675 / C91 / Nm57).